The primary structure comprises 206 residues: MRYIVALTGGIGSGKSTVANAFADLGINVIDADIIARQVVEPGAPALHAIADHFGANMIAADGTLQRRALRERIFANPEEKNWLNALLHPLIQQETQHQIQQATSPYVLWVVPLLVENSLYKKANRVLVVDVSPETQLKRTMQRDDVTREHVEQILAAQATREARLAVADDVIDNNGAPDAIASDVARLHAHYLQLASQFVSQEKP.

The DPCK domain maps to 4–200; sequence IVALTGGIGS…AHYLQLASQF (197 aa). Position 12–17 (12–17) interacts with ATP; the sequence is GSGKST.

It belongs to the CoaE family.

The protein localises to the cytoplasm. It catalyses the reaction 3'-dephospho-CoA + ATP = ADP + CoA + H(+). It participates in cofactor biosynthesis; coenzyme A biosynthesis; CoA from (R)-pantothenate: step 5/5. Functionally, catalyzes the phosphorylation of the 3'-hydroxyl group of dephosphocoenzyme A to form coenzyme A. The sequence is that of Dephospho-CoA kinase from Shigella boydii serotype 4 (strain Sb227).